Consider the following 601-residue polypeptide: Probable sphingosine-1-phosphate lyase (601 aa).

Residue lysine 360 is modified to N6-(pyridoxal phosphate)lysine.

It belongs to the group II decarboxylase family. Sphingosine-1-phosphate lyase subfamily. It depends on pyridoxal 5'-phosphate as a cofactor.

It carries out the reaction sphinganine 1-phosphate = hexadecanal + phosphoethanolamine. Its function is as follows. Cleaves phosphorylated sphingoid bases (PSBs), such as sphingosine-1-phosphate, into fatty aldehydes and phosphoethanolamine. Possibly implicated in influencing the macrophage autophagy pathway. The chain is Probable sphingosine-1-phosphate lyase from Legionella pneumophila subsp. pneumophila (strain Philadelphia 1 / ATCC 33152 / DSM 7513).